The chain runs to 502 residues: Solute carrier family 2, facilitated glucose transporter member 5 (502 aa).

N-acetylmethionine is present on Met-1. Over 1 to 17 (MEKEDQEKTGKLTLVLA) the chain is Cytoplasmic. The helical transmembrane segment at 18 to 38 (LATFLAAFGSSFQYGYNVAAV) threads the bilayer. Tyr-31 lines the D-fructose pocket. Over 39–67 (NSPSEFMQQFYNDTYYDRNKENIESFTLT) the chain is Extracellular. Residue Asn-50 is glycosylated (N-linked (GlcNAc...) asparagine). Residues 68–90 (LLWSLTVSMFPFGGFIGSLMVGF) form a helical membrane-spanning segment. Residues 91-97 (LVNNLGR) lie on the Cytoplasmic side of the membrane. The chain crosses the membrane as a helical span at residues 98–118 (KGALLFNNIFSILPAILMGCS). Residues 119–125 (KIAKSFE) are Extracellular-facing. Residues 126–148 (IIIASRLLVGICAGISSNVVPMY) traverse the membrane as a helical segment. The Cytoplasmic segment spans residues 149–160 (LGELAPKNLRGA). The chain crosses the membrane as a helical span at residues 161–181 (LGVVPQLFITVGILVAQLFGL). Gln-166 contributes to the D-fructose binding site. The Extracellular portion of the chain corresponds to 182 to 191 (RSVLASEEGW). Residues 192-212 (PILLGLTGVPAGLQLLLLPFF) form a helical membrane-spanning segment. Residues 213-276 (PESPRYLLIQ…LFRMQSLRWQ (64 aa)) are Cytoplasmic-facing. A helical membrane pass occupies residues 277-297 (LISTIVLMAGQQLSGVNAIYY). D-fructose is bound by residues Gln-287 and 295–297 (IYY). Over 298–312 (YADQIYLSAGVKSND) the chain is Extracellular. Residues 313–333 (VQYVTAGTGAVNVFMTMVTVF) traverse the membrane as a helical segment. The Cytoplasmic portion of the chain corresponds to 334 to 341 (VVELWGRR). A helical transmembrane segment spans residues 342 to 362 (NLLLIGFSTCLTACIVLTVAL). At 363–370 (ALQNTISW) the chain is on the extracellular side. Residues 371–393 (MPYVSIVCVIVYVIGHAVGPSPI) traverse the membrane as a helical segment. His-386 contributes to the D-fructose binding site. The Cytoplasmic portion of the chain corresponds to 394-411 (PALFITEIFLQSSRPSAY). A helical membrane pass occupies residues 412-432 (MIGGSVHWLSNFIVGLIFPFI). 418–419 (HW) lines the D-fructose pocket. The Extracellular segment spans residues 433-438 (QVGLGP). Residues 439-459 (YSFIIFAIICLLTTIYIFMVV) form a helical membrane-spanning segment. Residues 460 to 502 (PETKGRTFVEINQIFAKKNKVSDVYPEKEEKELNDLPPATREQ) are Cytoplasmic-facing.

The protein belongs to the major facilitator superfamily. Sugar transporter (TC 2.A.1.1) family. Glucose transporter subfamily. As to expression, detected in jejunum. Detected in kidney, skeletal muscle, brain and adipose tissue (at protein level). Detected in small intestine and in kidney, and at much lower levels in brain. Detected in enterocytes in duodenum, jejunum, and ileum.

It localises to the apical cell membrane. It is found in the cell membrane. The protein localises to the sarcolemma. The catalysed reaction is D-fructose(out) = D-fructose(in). With respect to regulation, fructose uptake is inhibited by mercury ions. Fructose uptake is only slightly inhibited by cytochalasin B. Functionally, functions as a fructose transporter that has only low activity with other monosaccharides. Can mediate the uptake of deoxyglucose, but with low efficiency. Essential for fructose uptake in the small intestine. Plays a role in the regulation of salt uptake and blood pressure in response to dietary fructose. Required for the development of high blood pressure in response to high dietary fructose intake. The polypeptide is Solute carrier family 2, facilitated glucose transporter member 5 (Rattus norvegicus (Rat)).